The chain runs to 346 residues: S-adenosylmethionine:tRNA ribosyltransferase-isomerase (346 aa).

The protein belongs to the QueA family. In terms of assembly, monomer.

Its subcellular location is the cytoplasm. The enzyme catalyses 7-aminomethyl-7-carbaguanosine(34) in tRNA + S-adenosyl-L-methionine = epoxyqueuosine(34) in tRNA + adenine + L-methionine + 2 H(+). It participates in tRNA modification; tRNA-queuosine biosynthesis. Its function is as follows. Transfers and isomerizes the ribose moiety from AdoMet to the 7-aminomethyl group of 7-deazaguanine (preQ1-tRNA) to give epoxyqueuosine (oQ-tRNA). The sequence is that of S-adenosylmethionine:tRNA ribosyltransferase-isomerase from Chloroherpeton thalassium (strain ATCC 35110 / GB-78).